Consider the following 142-residue polypeptide: Baculoviral IAP repeat-containing protein 5 (142 aa).

The stretch at 18-88 (RVSTFKNWPF…KHSSGCAFLS (71 aa)) is one BIR repeat. Phosphoserine; by AURKC is present on serine 20. Lysine 23 carries the post-translational modification N6-acetyllysine. Threonine 34 is subject to Phosphothreonine; by CDK1 and CDK15. Threonine 48 bears the Phosphothreonine mark. 4 residues coordinate Zn(2+): cysteine 57, cysteine 60, histidine 77, and cysteine 84. Residues lysine 90, lysine 110, lysine 112, and lysine 115 each carry the N6-acetyllysine modification. Phosphothreonine; by AURKB is present on threonine 117. Lysine 129 is subject to N6-acetyllysine.

The protein belongs to the IAP family. As to quaternary structure, monomer or homodimer. Exists as a homodimer in the apo state and as a monomer in the CPC-bound state. The monomer protects cells against apoptosis more efficiently than the dimer. Only the dimeric form is capable of enhancing tubulin stability in cells. When phosphorylated, interacts with LAMTOR5/HBXIP; the resulting complex binds pro-CASP9, as well as active CASP9, but much less efficiently. Component of the chromosomal passenger complex (CPC) composed of at least BIRC5/survivin, CDCA8/borealin, INCENP, AURKB or AURKC; in the complex forms a triple-helix bundle-based subcomplex with INCENP and CDCA8. Interacts with JTB. Interacts (via BIR domain) with histone H3 phosphorylated at 'Thr-3' (H3pT3). Interacts with EVI5. Interacts with GTP-bound RAN in both the S and M phases of the cell cycle. Interacts with USP9X. Interacts with tubulin. Interacts with BIRC2/c-IAP1. The acetylated form at Lys-129 interacts with STAT3. The monomeric form deacetylated at Lys-129 interacts with XPO1/CRM1. The monomeric form interacts with XIAP/BIRC4. Both the dimeric and monomeric form can interact with DIABLO/SMAC. Interacts with BIRC6/bruce. Interacts with FBXL7; this interaction facilitates the polyubiquitination and subsequent proteasomal degradation of BIRC5 by the SCF(FBXL7) E3 ubiquitin-protein ligase complex. Post-translationally, ubiquitinated by the Cul9-RING ubiquitin-protein ligase complex, leading to its degradation. Ubiquitination is required for centrosomal targeting. Deubiquitinated by USP35 or USP38; leading to stabilization. Acetylation at Lys-129 results in its homodimerization, while deacetylation promotes the formation of monomers which heterodimerize with XPO1/CRM1 which facilitates its nuclear export. The acetylated form represses STAT3 transactivation. The dynamic equilibrium between its acetylation and deacetylation at Lys-129 determines its interaction with XPO1/CRM1, its subsequent subcellular localization, and its ability to inhibit STAT3 transactivation. In terms of processing, in vitro phosphorylation at Thr-117 by AURKB prevents interaction with INCENP and localization to mitotic chromosomes. Phosphorylation at Thr-48 by CK2 is critical for its mitotic and anti-apoptotic activities. Phosphorylation at Thr-34 by CDK15 is critical for its anti-apoptotic activity. Phosphorylation at Ser-20 by AURKC is critical for regulation of proper chromosome alignment and segregation, and possibly cytokinesis.

The protein resides in the cytoplasm. It localises to the nucleus. The protein localises to the chromosome. Its subcellular location is the centromere. It is found in the cytoskeleton. The protein resides in the spindle. It localises to the kinetochore. The protein localises to the midbody. Its function is as follows. Multitasking protein that has dual roles in promoting cell proliferation and preventing apoptosis. Component of a chromosome passage protein complex (CPC) which is essential for chromosome alignment and segregation during mitosis and cytokinesis. Acts as an important regulator of the localization of this complex; directs CPC movement to different locations from the inner centromere during prometaphase to midbody during cytokinesis and participates in the organization of the center spindle by associating with polymerized microtubules. Involved in the recruitment of CPC to centromeres during early mitosis via association with histone H3 phosphorylated at 'Thr-3' (H3pT3) during mitosis. The complex with RAN plays a role in mitotic spindle formation by serving as a physical scaffold to help deliver the RAN effector molecule TPX2 to microtubules. May counteract a default induction of apoptosis in G2/M phase. The acetylated form represses STAT3 transactivation of target gene promoters. May play a role in neoplasia. Inhibitor of CASP3 and CASP7. Essential for the maintenance of mitochondrial integrity and function. This Bos taurus (Bovine) protein is Baculoviral IAP repeat-containing protein 5 (BIRC5).